Here is a 441-residue protein sequence, read N- to C-terminus: GTPase Der (441 aa).

EngA-type G domains follow at residues 4–169 and 178–353; these read PIVA…PEGS and PKVA…DAQT. GTP is bound by residues 10 to 17, 57 to 61, 120 to 123, 184 to 191, 231 to 235, and 296 to 299; these read GRPNVGKS, DTGGI, NKVD, GKPNVGKS, DTAGL, and NKWD. The 85-residue stretch at 354–438 folds into the KH-like domain; it reads MRIPTGVLNE…SIRFINRERK (85 aa).

Belongs to the TRAFAC class TrmE-Era-EngA-EngB-Septin-like GTPase superfamily. EngA (Der) GTPase family. In terms of assembly, associates with the 50S ribosomal subunit.

In terms of biological role, GTPase that plays an essential role in the late steps of ribosome biogenesis. This chain is GTPase Der, found in Lachnospira eligens (strain ATCC 27750 / DSM 3376 / VPI C15-48 / C15-B4) (Eubacterium eligens).